The primary structure comprises 126 residues: Holo-[acyl-carrier-protein] synthase (126 aa).

Mg(2+) is bound by residues Asp-9 and Glu-59.

It belongs to the P-Pant transferase superfamily. AcpS family. Requires Mg(2+) as cofactor.

Its subcellular location is the cytoplasm. It carries out the reaction apo-[ACP] + CoA = holo-[ACP] + adenosine 3',5'-bisphosphate + H(+). Transfers the 4'-phosphopantetheine moiety from coenzyme A to a Ser of acyl-carrier-protein. The chain is Holo-[acyl-carrier-protein] synthase from Myxococcus xanthus (strain DK1622).